Consider the following 115-residue polypeptide: uncharacterized protein (115 aa).

A CHCH domain is found at 63-108 (GSPCGFEFREAITCQKTNSDGEIEQGACGKELMSFMECVTRTQCFG). 2 consecutive short sequence motifs (cx9C motif) follow at residues 66–76 (CGFEFREAITC) and 90–100 (CGKELMSFMEC). Disulfide bonds link Cys-66–Cys-100 and Cys-76–Cys-90.

This is an uncharacterized protein from Caenorhabditis elegans.